The chain runs to 207 residues: MPKVALYNQAGSQVGDIELSDAVFGIEPNENVLHDAVVMQQASLRQGTHKTKTRSEVRGGGRKPWRQKGTGRARQGSIRSPQWVGGGTVFGPTPRSYSYKLPKKVRRLAIKSALSSKVKAEEIVVLESLALEAPKTKEMASILSGLSVDRKALVVTADYNDNVALSARNIPGVTFVTAEGVNVLDVIKHDKLIITKDAVEKVEEVLA.

The segment at 44 to 78 (LRQGTHKTKTRSEVRGGGRKPWRQKGTGRARQGSI) is disordered. Over residues 60–71 (GGRKPWRQKGTG) the composition is skewed to basic residues.

This sequence belongs to the universal ribosomal protein uL4 family. In terms of assembly, part of the 50S ribosomal subunit.

Its function is as follows. One of the primary rRNA binding proteins, this protein initially binds near the 5'-end of the 23S rRNA. It is important during the early stages of 50S assembly. It makes multiple contacts with different domains of the 23S rRNA in the assembled 50S subunit and ribosome. Forms part of the polypeptide exit tunnel. The polypeptide is Large ribosomal subunit protein uL4 (Halalkalibacterium halodurans (strain ATCC BAA-125 / DSM 18197 / FERM 7344 / JCM 9153 / C-125) (Bacillus halodurans)).